Reading from the N-terminus, the 445-residue chain is TNF receptor-associated factor family protein DDB_G0290971 (445 aa).

An RING-type; degenerate zinc finger spans residues 23 to 67 (CPICFDLYYSSSSKKEVFQCRDGHLACKSCWSDSLLNKKECMICR). 2 TRAF-type zinc fingers span residues 133–186 (KHQV…QLDA) and 186–242 (AHAL…ESID). The stretch at 269-307 (QLELVECKNQIYQINNKYEKLLERVIKLEQLSMDASNKL) forms a coiled coil. The MATH domain occupies 314–441 (KNSIIFATFS…EDKLVIGLRI (128 aa)).

Belongs to the TNF receptor-associated factor family. A subfamily.

It localises to the cytoplasm. Its function is as follows. Probable adapter protein and signal transducer that links members of the tumor necrosis factor receptor family to different signaling pathways by association with the receptor cytoplasmic domain and kinases. The polypeptide is TNF receptor-associated factor family protein DDB_G0290971 (Dictyostelium discoideum (Social amoeba)).